Reading from the N-terminus, the 349-residue chain is Selenide, water dikinase (349 aa).

The active site involves Cys-17. Residues Lys-20 and 48–50 (YFD) each bind ATP. Mg(2+) is bound at residue Asp-51. Residues Asp-68, Asp-91, and 139 to 141 (GHS) contribute to the ATP site. Asp-91 is a Mg(2+) binding site. Asp-229 lines the Mg(2+) pocket.

The protein belongs to the selenophosphate synthase 1 family. Class I subfamily. Homodimer. The cofactor is Mg(2+).

The catalysed reaction is hydrogenselenide + ATP + H2O = selenophosphate + AMP + phosphate + 2 H(+). Its function is as follows. Synthesizes selenophosphate from selenide and ATP. This chain is Selenide, water dikinase, found in Nitrosomonas eutropha (strain DSM 101675 / C91 / Nm57).